Reading from the N-terminus, the 515-residue chain is Zinc metalloproteinase-disintegrin-like EoMP06 (515 aa).

The propeptide occupies 1 to 94; sequence VEDHCYYHGR…TLGLIVPPHG (94 aa). Pyrrolidone carboxylic acid is present on Gln95. Residues 100-296 form the Peptidase M12B domain; that stretch reads KFIELIIVVD…YNPKCIVDPP (197 aa). Residue Glu103 coordinates Ca(2+). An N-linked (GlcNAc...) asparagine glycan is attached at Asn160. Asp187 serves as a coordination point for Ca(2+). 2 N-linked (GlcNAc...) asparagine glycosylation sites follow: Asn194 and Asn225. Intrachain disulfides connect Cys211-Cys291, Cys251-Cys275, and Cys253-Cys258. Position 236 (His236) interacts with Zn(2+). Glu237 is an active-site residue. The Zn(2+) site is built by His240 and His246. Ca(2+)-binding residues include Cys291, Val306, Asn309, Val311, Glu313, Glu316, and Asp319. Residues 304-390 form the Disintegrin domain; sequence PAVCGNGVWE…ECPRNEFQRN (87 aa). Disulfide bonds link Cys307-Cys336, Cys318-Cys331, Cys320-Cys326, Cys330-Cys353, Cys344-Cys350, Cys349-Cys375, Cys362-Cys382, Cys369-Cys401, Cys394-Cys406, Cys413-Cys466, Cys428-Cys477, Cys441-Cys454, Cys461-Cys503, and Cys497-Cys508. A D/ECD-tripeptide motif is present at residues 368 to 370; the sequence is DCD. Residues Asp370, Val371, and Asn385 each coordinate Ca(2+).

This sequence belongs to the venom metalloproteinase (M12B) family. P-III subfamily. P-IIIa sub-subfamily. As to quaternary structure, monomer. It depends on Zn(2+) as a cofactor. As to expression, expressed by the venom gland.

It is found in the secreted. Its function is as follows. Snake venom zinc metalloproteinase that catalyzes the conversion of prothrombin (F2) to alpha-thrombin through formation of a thrombin intermediate, thereby functioning as a procoagulant protein. The chain is Zinc metalloproteinase-disintegrin-like EoMP06 from Echis ocellatus (Ocellated saw-scaled viper).